Reading from the N-terminus, the 293-residue chain is 33 kDa chaperonin (293 aa).

2 disulfide bridges follow: C236/C238 and C269/C272.

It belongs to the HSP33 family. In terms of processing, under oxidizing conditions two disulfide bonds are formed involving the reactive cysteines. Under reducing conditions zinc is bound to the reactive cysteines and the protein is inactive.

The protein localises to the cytoplasm. Functionally, redox regulated molecular chaperone. Protects both thermally unfolding and oxidatively damaged proteins from irreversible aggregation. Plays an important role in the bacterial defense system toward oxidative stress. This Lactobacillus delbrueckii subsp. bulgaricus (strain ATCC 11842 / DSM 20081 / BCRC 10696 / JCM 1002 / NBRC 13953 / NCIMB 11778 / NCTC 12712 / WDCM 00102 / Lb 14) protein is 33 kDa chaperonin.